The sequence spans 233 residues: Superoxide dismutase [Mn], mitochondrial (233 aa).

Residues 1-27 (MALRSLVTRKNLPSAFKAATGLGQLRG) constitute a mitochondrion transit peptide. Positions 55, 103, 192, and 196 each coordinate Mn(2+).

Belongs to the iron/manganese superoxide dismutase family. Homotetramer. Requires Mn(2+) as cofactor. Present in all tissues examined (leaf, petiole, root, latex, callus) with young leaves showing the highest levels in intact plants.

It is found in the mitochondrion matrix. It carries out the reaction 2 superoxide + 2 H(+) = H2O2 + O2. Its function is as follows. Destroys superoxide anion radicals which are normally produced within the cells and which are toxic to biological systems. This chain is Superoxide dismutase [Mn], mitochondrial (SODA), found in Hevea brasiliensis (Para rubber tree).